Here is a 440-residue protein sequence, read N- to C-terminus: Transposon Ty1-DR3 Gag polyprotein (440 aa).

Composition is skewed to polar residues over residues 1–10 (MESQQLSNYP), 48–60 (TKANSQQTTTPAS), and 127–152 (QSQFPQYPSSVGTPLSTPSPESGNTF). Disordered stretches follow at residues 1–93 (MESQ…MMTQ), 126–173 (PQSQ…RPPP), and 352–440 (GSRN…PETY). Residues 153–165 (TDSSSADSDMTST) show a composition bias toward low complexity. Residues 299–401 (NNGIHINNKV…NSKSKTARAH (103 aa)) form an RNA-binding region. The span at 402 to 428 (NVSTSINSPSTDNDSISKSTTEPIQLN) shows a compositional bias: polar residues. Residue Ser-416 is modified to Phosphoserine. Residues 429-440 (NKHDLHLRPETY) show a composition bias toward basic and acidic residues.

Homotrimer.

It localises to the cytoplasm. Capsid protein (CA) is the structural component of the virus-like particle (VLP), forming the shell that encapsulates the retrotransposons dimeric RNA genome. The particles are assembled from trimer-clustered units and there are holes in the capsid shells that allow for the diffusion of macromolecules. CA also has nucleocapsid-like chaperone activity, promoting primer tRNA(i)-Met annealing to the multipartite primer-binding site (PBS), dimerization of Ty1 RNA and initiation of reverse transcription. The protein is Transposon Ty1-DR3 Gag polyprotein (TY1A-DR3) of Saccharomyces cerevisiae (strain ATCC 204508 / S288c) (Baker's yeast).